The sequence spans 556 residues: Arginine--tRNA ligase (556 aa).

Positions Ala132 to His142 match the 'HIGH' region motif.

This sequence belongs to the class-I aminoacyl-tRNA synthetase family. In terms of assembly, monomer.

The protein resides in the cytoplasm. The enzyme catalyses tRNA(Arg) + L-arginine + ATP = L-arginyl-tRNA(Arg) + AMP + diphosphate. The polypeptide is Arginine--tRNA ligase (Listeria monocytogenes serotype 4a (strain HCC23)).